Consider the following 358-residue polypeptide: Probable D-xylulose reductase A (358 aa).

Positions 47, 72, and 73 each coordinate Zn(2+). An NAD(+)-binding site is contributed by 182–187; the sequence is GAGPVG.

This sequence belongs to the zinc-containing alcohol dehydrogenase family. Zn(2+) is required as a cofactor.

The enzyme catalyses xylitol + NAD(+) = D-xylulose + NADH + H(+). Its pathway is carbohydrate degradation; L-arabinose degradation via L-arabinitol; D-xylulose 5-phosphate from L-arabinose (fungal route): step 4/5. Functionally, xylitol dehydrogenase which catalyzes the conversion of xylitol to D-xylulose. Xylose is a major component of hemicelluloses such as xylan. Most fungi utilize D-xylose via three enzymatic reactions, xylose reductase (XR), xylitol dehydrogenase (XDH), and xylulokinase, to form xylulose 5-phosphate, which enters pentose phosphate pathway. In Aspergillus clavatus (strain ATCC 1007 / CBS 513.65 / DSM 816 / NCTC 3887 / NRRL 1 / QM 1276 / 107), this protein is Probable D-xylulose reductase A (xdhA).